Consider the following 337-residue polypeptide: MVREEVAVSTRTLQWKCVESRTDSKRLYYGRFILAPLMKGQADTIGIAMRRALLGEIEGTCITRVKSEKVPNEYYTIVGIEESVHEILMNLKEIVLRSHLYGTRDASICVRGPRYVTAQDIIPPPSVEIVDTTQHIASLTEPIDLCIELQIERDRGYRMKTPNNYQDGSYPIDAVSMPVRNANHSIHSYGNRNEKQEILFLEIWTNGSLTPKEALHEASRNLIDLFIPFLHAEEQDIVLEDNPNRFTVPLFTFHDRLANIRKNKKGIALKCIFIDQSELPPRTYNCLKRSNIHTLLDLLSNSQEDLMRIEHFRIEDVKQILDILQKHFTIDLPKNKF.

Positions 1–233 (MVREEVAVST…DLFIPFLHAE (233 aa)) are alpha N-terminal domain (alpha-NTD). An alpha C-terminal domain (alpha-CTD) region spans residues 266-337 (GIALKCIFID…FTIDLPKNKF (72 aa)).

It belongs to the RNA polymerase alpha chain family. In plastids the minimal PEP RNA polymerase catalytic core is composed of four subunits: alpha, beta, beta', and beta''. When a (nuclear-encoded) sigma factor is associated with the core the holoenzyme is formed, which can initiate transcription.

The protein resides in the plastid. Its subcellular location is the chloroplast. It catalyses the reaction RNA(n) + a ribonucleoside 5'-triphosphate = RNA(n+1) + diphosphate. In terms of biological role, DNA-dependent RNA polymerase catalyzes the transcription of DNA into RNA using the four ribonucleoside triphosphates as substrates. The protein is DNA-directed RNA polymerase subunit alpha of Liriodendron tulipifera (Tuliptree).